The primary structure comprises 438 residues: Na(+)/H(+) antiporter NhaA (438 aa).

Helical transmembrane passes span 23–43, 62–82, 104–124, 133–153, 162–182, 185–205, 212–232, 302–322, 337–357, 372–392, and 410–430; these read FGGI…NSFV, FFIG…LFFL, SFPV…YFFL, GFGI…MLLG, VFLI…IALF, TNLK…LALL, SLIP…QSGI, FLAP…NAGV, LGVI…ITFI, WWHI…SMFI, and IAIL…LFLL.

It belongs to the NhaA Na(+)/H(+) (TC 2.A.33) antiporter family.

The protein resides in the cell inner membrane. The enzyme catalyses Na(+)(in) + 2 H(+)(out) = Na(+)(out) + 2 H(+)(in). Na(+)/H(+) antiporter that extrudes sodium in exchange for external protons. The polypeptide is Na(+)/H(+) antiporter NhaA (Helicobacter acinonychis (strain Sheeba)).